A 276-amino-acid polypeptide reads, in one-letter code: MKVALVVLALFGVSLAASIDNIEIPPSKNIYVEPINQPEVDPSLEIVNGQEVVPHSIPYQIFLVASAGETSWTCGGSLITKRYVLTAAHCIQGAKSVHVTLGAHNLAKHEASKVTVNGRSWVIHEKYDSTNIDNDIGVIQLERNLTLTRSIQLARLPSLRDVGINLEGRTATVSGWGLTNGIFQTTTDVLRANNTIISNKECNDVFKIVQPTEVCLSIAGGRSACSGDSGGPLVIDNVQHGIVSYGSSYCRSTPSVFTRVSSYLNWLQTHSEWRAQ.

An N-terminal signal peptide occupies residues 1–16 (MKVALVVLALFGVSLA). Positions 17–45 (ASIDNIEIPPSKNIYVEPINQPEVDPSLE) are cleaved as a propeptide — activation peptide. The Peptidase S1 domain maps to 46–272 (IVNGQEVVPH…YLNWLQTHSE (227 aa)). An intrachain disulfide couples C74 to C90. Residues H89 and D135 each act as charge relay system in the active site. N-linked (GlcNAc...) asparagine glycosylation is found at N144 and N193. Intrachain disulfides connect C202/C215 and C225/C250. S229 (charge relay system) is an active-site residue.

Belongs to the peptidase S1 family. In terms of tissue distribution, expressed in larval carcasses and gut, and adult gut.

It localises to the secreted. Its subcellular location is the extracellular space. The catalysed reaction is Preferential cleavage: Tyr-|-Xaa, Trp-|-Xaa, Phe-|-Xaa, Leu-|-Xaa.. Its function is as follows. Serine protease with chymotryptic and collagenolytic activities. This Phaedon cochleariae (Mustard beetle) protein is Chymotrypsin.